Consider the following 503-residue polypeptide: Maturase K (503 aa).

The protein belongs to the intron maturase 2 family. MatK subfamily.

It is found in the plastid. The protein localises to the chloroplast. Functionally, usually encoded in the trnK tRNA gene intron. Probably assists in splicing its own and other chloroplast group II introns. In Syzygium australe (Brush cherry), this protein is Maturase K.